A 200-amino-acid chain; its full sequence is Probable molybdenum cofactor guanylyltransferase (200 aa).

GTP-binding positions include 9 to 11, K21, D69, and D100; that span reads LAG. Residue D100 participates in Mg(2+) binding.

This sequence belongs to the MobA family. Requires Mg(2+) as cofactor.

The protein localises to the cytoplasm. It carries out the reaction Mo-molybdopterin + GTP + H(+) = Mo-molybdopterin guanine dinucleotide + diphosphate. In terms of biological role, transfers a GMP moiety from GTP to Mo-molybdopterin (Mo-MPT) cofactor (Moco or molybdenum cofactor) to form Mo-molybdopterin guanine dinucleotide (Mo-MGD) cofactor. The protein is Probable molybdenum cofactor guanylyltransferase of Bacillus cereus (strain AH187).